A 626-amino-acid polypeptide reads, in one-letter code: Fructose-1,6-bisphosphatase class 3 (626 aa).

It belongs to the FBPase class 3 family. The cofactor is Mn(2+).

The catalysed reaction is beta-D-fructose 1,6-bisphosphate + H2O = beta-D-fructose 6-phosphate + phosphate. Its pathway is carbohydrate biosynthesis; gluconeogenesis. This is Fructose-1,6-bisphosphatase class 3 from Enterococcus faecalis (strain ATCC 700802 / V583).